Reading from the N-terminus, the 255-residue chain is uncharacterized protein (255 aa).

A run of 2 helical transmembrane segments spans residues 99-119 and 146-166; these read ISLI…ITSF and YIGS…ILFL.

The protein resides in the mitochondrion membrane. This is an uncharacterized protein from Schizosaccharomyces pombe (strain 972 / ATCC 24843) (Fission yeast).